Reading from the N-terminus, the 849-residue chain is Protein translocase subunit SecA (849 aa).

ATP contacts are provided by residues glutamine 85, 103 to 107 (GEGKT), and aspartate 493. Residues cysteine 832, cysteine 834, cysteine 843, and histidine 844 each contribute to the Zn(2+) site.

This sequence belongs to the SecA family. Monomer and homodimer. Part of the essential Sec protein translocation apparatus which comprises SecA, SecYEG and auxiliary proteins SecDF. Other proteins may also be involved. Requires Zn(2+) as cofactor.

It localises to the cell membrane. It is found in the cytoplasm. The catalysed reaction is ATP + H2O + cellular proteinSide 1 = ADP + phosphate + cellular proteinSide 2.. In terms of biological role, part of the Sec protein translocase complex. Interacts with the SecYEG preprotein conducting channel. Has a central role in coupling the hydrolysis of ATP to the transfer of proteins into and across the cell membrane, serving as an ATP-driven molecular motor driving the stepwise translocation of polypeptide chains across the membrane. This Streptococcus thermophilus (strain CNRZ 1066) protein is Protein translocase subunit SecA.